Consider the following 271-residue polypeptide: Phosphatidylinositol transfer protein beta isoform (271 aa).

The residue at position 215 (lysine 215) is an N6-acetyllysine. Serine 262 carries the phosphoserine modification.

Belongs to the PtdIns transfer protein family. PI transfer class I subfamily. In terms of processing, constitutive phosphorylation of Ser-262 has no effect on phospholipid transfer activity but is required for Golgi targeting. In terms of tissue distribution, widely expressed in various tissues including brain.

Its subcellular location is the golgi apparatus. The protein resides in the golgi apparatus membrane. It is found in the endoplasmic reticulum membrane. The catalysed reaction is a 1,2-diacyl-sn-glycero-3-phosphocholine(in) = a 1,2-diacyl-sn-glycero-3-phosphocholine(out). It catalyses the reaction a 1,2-diacyl-sn-glycero-3-phospho-(1D-myo-inositol)(in) = a 1,2-diacyl-sn-glycero-3-phospho-(1D-myo-inositol)(out). It carries out the reaction an N-(acyl)-sphingosylphosphocholine(in) = an N-(acyl)-sphingosylphosphocholine(out). Its activity is regulated as follows. Phosphatidylinositol transfer activity is inhibited by N-ethylmaleimide. In terms of biological role, catalyzes the transfer of phosphatidylinositol and phosphatidylcholine between membranes. Also catalyzes the transfer of sphingomyelin. Required for COPI-mediated retrograde transport from the Golgi to the endoplasmic reticulum; phosphatidylinositol and phosphatidylcholine transfer activity is essential for this function. This Homo sapiens (Human) protein is Phosphatidylinositol transfer protein beta isoform (PITPNB).